Consider the following 533-residue polypeptide: MHRRDFLKLTAALGAATSLPLWSRAALAADFSPLPIPPLLQPDANGKINLNIQTGSVVWLPSTATQTWGYNGNLLGPAIRLQRGKAVTIDITNALPEATTVHWHGLEIPGEVDGGPQALIQPGAKRQVTFAVEQPAATCWFHPHTHSKTGHQVAMGLGGLVLIDDSDSETLPLPKQWGVDDIPVILQDKLLDKHGQVDYQLDVMTAAVGWFGDRMLTNGVPYPQQITPRGWVRLRLLNGCNARSLNLALSDGRPMYVIASDGGLLAEPVVVRELPILMGERFEVLVDTRDGQSLDLVTLPVTQMGMTLAPFDQPLPVLRIQPSLAIGSQVLPESLVVIPELADVTGVQERWFQLMMDPKLDMLGMQALVARYGMKAMAGMNMNHGDMGAMDHGNRPDMSQGKMKGMDHGTMNGAPAFNFSHANRINGKAFSMTEPAFDAKQGKYEKWTISGEGDMMLHPFHVHGTQFRILTENGKPPAEHRRGWKDIVRVEGARSEILVRFNYLAPASTPYMAHCHLLEHEDTGMMLGFTVSA.

Positions 1 to 28 (MHRRDFLKLTAALGAATSLPLWSRAALA) form a signal peptide, tat-type signal. Plastocyanin-like domains lie at 53–166 (QTGS…IDDS), 221–290 (PYPQ…DTRD), and 416–532 (AFNF…FTVS). Cu cation is bound by residues histidine 102, histidine 104, histidine 142, and histidine 144. Cu cation-binding residues include histidine 458, histidine 461, histidine 463, histidine 514, cysteine 515, histidine 516, and histidine 520.

Belongs to the multicopper oxidase family. Monomer. The cofactor is Cu cation. In terms of processing, predicted to be exported by the Tat system. The position of the signal peptide cleavage has not been experimentally proven.

The protein resides in the periplasm. It catalyses the reaction 4 Cu(+) + O2 + 4 H(+) = 4 Cu(2+) + 2 H2O. Functionally, multicopper oxidase involved in copper homeostasis and copper tolerance under aerobic conditions. Is responsible for the oxidation of Cu(+) to the less harmful Cu(2+) in the periplasm, thereby preventing Cu(+) from entering the cytoplasm. The chain is Multicopper oxidase CueO (cueO) from Yersinia pestis.